Reading from the N-terminus, the 119-residue chain is Phenol 2-monooxygenase, oxygenase component DmpO (119 aa).

The multicomponent enzyme phenol hydroxylase is formed by DmpL (P1 component), DmpM (P2 component), DmpN (P3 component), DmpO (P4 component) and DmpP (P5 component). The oxygenase component is a dimer composed of three subunits, DmpL, DmpN and DmpO (DmpLNO).

The catalysed reaction is phenol + NADH + O2 + H(+) = catechol + NAD(+) + H2O. The protein operates within aromatic compound metabolism; phenol degradation. Its activity is regulated as follows. Requires DmpM for efficient turnover. The activity of DmpLNO oxygenase is inhibited by dithiothreitol (DTT) by a mechanism apparently involving H(2)O(2) generation. Its function is as follows. Part of a multicomponent enzyme which catalyzes the degradation of phenol and some of its methylated derivatives. DmpL, DmpN and DmpO form the oxygenase component of the complex. Required for growth on phenol and for in vitro phenol hydroxylase activity. The polypeptide is Phenol 2-monooxygenase, oxygenase component DmpO (Pseudomonas sp. (strain CF600)).